The primary structure comprises 308 residues: Acetyl-coenzyme A carboxylase carboxyl transferase subunit beta (308 aa).

The 270-residue stretch at 25 to 294 folds into the CoA carboxyltransferase N-terminal domain; the sequence is VWTKCTSCEQ…PLVVSVNDSP (270 aa). 4 residues coordinate Zn(2+): Cys-29, Cys-32, Cys-48, and Cys-51. Residues 29-51 form a C4-type zinc finger; sequence CTSCEQVLYHAELERNLEVCPKC.

Belongs to the AccD/PCCB family. In terms of assembly, acetyl-CoA carboxylase is a heterohexamer composed of biotin carboxyl carrier protein (AccB), biotin carboxylase (AccC) and two subunits each of ACCase subunit alpha (AccA) and ACCase subunit beta (AccD). It depends on Zn(2+) as a cofactor.

It is found in the cytoplasm. It catalyses the reaction N(6)-carboxybiotinyl-L-lysyl-[protein] + acetyl-CoA = N(6)-biotinyl-L-lysyl-[protein] + malonyl-CoA. Its pathway is lipid metabolism; malonyl-CoA biosynthesis; malonyl-CoA from acetyl-CoA: step 1/1. Its function is as follows. Component of the acetyl coenzyme A carboxylase (ACC) complex. Biotin carboxylase (BC) catalyzes the carboxylation of biotin on its carrier protein (BCCP) and then the CO(2) group is transferred by the transcarboxylase to acetyl-CoA to form malonyl-CoA. This Vibrio vulnificus (strain CMCP6) protein is Acetyl-coenzyme A carboxylase carboxyl transferase subunit beta.